Consider the following 201-residue polypeptide: Holliday junction branch migration complex subunit RuvA (201 aa).

Residues 1 to 64 (MIGRLRGTLA…EDAQLLYGFA (64 aa)) form a domain I region. The interval 65–143 (EKRERELFRE…AWESMPAIAT (79 aa)) is domain II. Residues 144 to 152 (LVVEPGSKT) are flexible linker. Residues 153 to 201 (AVTSAENDAVSALISLGFKPQEASRAVSAIQEENLSSEEMIRRALKGMV) form a domain III region.

Belongs to the RuvA family. Homotetramer. Forms an RuvA(8)-RuvB(12)-Holliday junction (HJ) complex. HJ DNA is sandwiched between 2 RuvA tetramers; dsDNA enters through RuvA and exits via RuvB. An RuvB hexamer assembles on each DNA strand where it exits the tetramer. Each RuvB hexamer is contacted by two RuvA subunits (via domain III) on 2 adjacent RuvB subunits; this complex drives branch migration. In the full resolvosome a probable DNA-RuvA(4)-RuvB(12)-RuvC(2) complex forms which resolves the HJ.

Its subcellular location is the cytoplasm. The RuvA-RuvB-RuvC complex processes Holliday junction (HJ) DNA during genetic recombination and DNA repair, while the RuvA-RuvB complex plays an important role in the rescue of blocked DNA replication forks via replication fork reversal (RFR). RuvA specifically binds to HJ cruciform DNA, conferring on it an open structure. The RuvB hexamer acts as an ATP-dependent pump, pulling dsDNA into and through the RuvAB complex. HJ branch migration allows RuvC to scan DNA until it finds its consensus sequence, where it cleaves and resolves the cruciform DNA. This chain is Holliday junction branch migration complex subunit RuvA, found in Stutzerimonas stutzeri (strain A1501) (Pseudomonas stutzeri).